The primary structure comprises 191 residues: Protein YceI (191 aa).

The first 22 residues, 1–22, serve as a signal peptide directing secretion; it reads MKKNLLGFTLASLLFTTGSAVA.

The protein belongs to the UPF0312 family. Type 1 subfamily.

It is found in the periplasm. The chain is Protein YceI from Salmonella newport (strain SL254).